The chain runs to 145 residues: Large ribosomal subunit protein uL15 (145 aa).

Residues 1 to 18 (MKLHELKYTEGSKKDVTR) are compositionally biased toward basic and acidic residues. The interval 1-51 (MKLHELKYTEGSKKDVTRVGRGMASGKGKTSTRGHKGQNSRSGGGVRVGFE) is disordered. The span at 42 to 51 (SGGGVRVGFE) shows a compositional bias: gly residues.

This sequence belongs to the universal ribosomal protein uL15 family. Part of the 50S ribosomal subunit.

In terms of biological role, binds to the 23S rRNA. This is Large ribosomal subunit protein uL15 from Mesoplasma florum (strain ATCC 33453 / NBRC 100688 / NCTC 11704 / L1) (Acholeplasma florum).